Here is a 317-residue protein sequence, read N- to C-terminus: 1-phosphatidylinositol phosphodiesterase (317 aa).

Positions 1–22 (MYKNYLQRTLVLLLCFILYFFT) are cleaved as a signal peptide. One can recognise a PI-PLC X-box domain in the interval 58–196 (LAALSIPGTH…LKDVRGKILL (139 aa)). His67 serves as the catalytic Proton acceptor. His115 acts as the Proton donor in catalysis.

In terms of assembly, monomer.

The protein resides in the secreted. It localises to the cytoplasm. It catalyses the reaction a 1,2-diacyl-sn-glycero-3-phospho-(1D-myo-inositol) = 1D-myo-inositol 1,2-cyclic phosphate + a 1,2-diacyl-sn-glycerol. Functionally, cleaves glycosylphosphatidylinositol (GPI) and phosphatidylinositol (PI) anchors but not PI phosphates. Important factor in pathogenesis, PI-PLC activity is present only in virulent listeria species. It may participate in the lysis of the phagolysosomal membrane. This is 1-phosphatidylinositol phosphodiesterase (plcA) from Listeria monocytogenes serovar 1/2a (strain ATCC BAA-679 / EGD-e).